The primary structure comprises 345 residues: Type II methyltransferase M.AplI (345 aa).

One can recognise an SAM-dependent MTase C5-type domain in the interval Leu-25–Lys-325. The active site involves Cys-93.

It belongs to the class I-like SAM-binding methyltransferase superfamily. C5-methyltransferase family.

The catalysed reaction is a 2'-deoxycytidine in DNA + S-adenosyl-L-methionine = a 5-methyl-2'-deoxycytidine in DNA + S-adenosyl-L-homocysteine + H(+). A methylase, recognizes the double-stranded sequence 5'-CTGCAG-3', methylates C-4 on both strands, and protects the DNA from cleavage by the AplI endonuclease. This Arthrospira platensis (strain NIES-39 / UTEX 3086 / IAM M-135) (Spirulina platensis) protein is Type II methyltransferase M.AplI (aplIM).